The sequence spans 360 residues: Glycerol-3-phosphate dehydrogenase [NAD(+)], cytoplasmic (360 aa).

NAD(+)-binding positions include 11 to 16 (GSGNWG), phenylalanine 98, lysine 121, and alanine 155. A substrate-binding site is contributed by lysine 121. The active-site Proton acceptor is the lysine 206. Arginine 270 and glutamine 299 together coordinate NAD(+). 270–271 (RN) contributes to the substrate binding site.

Belongs to the NAD-dependent glycerol-3-phosphate dehydrogenase family. Homodimer.

It is found in the cytoplasm. The catalysed reaction is sn-glycerol 3-phosphate + NAD(+) = dihydroxyacetone phosphate + NADH + H(+). Its pathway is phospholipid metabolism; alpha-glycerophosphate cycle. This is Glycerol-3-phosphate dehydrogenase [NAD(+)], cytoplasmic (Gpdh1) from Drosophila kanekoi (Fruit fly).